A 145-amino-acid polypeptide reads, in one-letter code: Protein SprT-like (145 aa).

In terms of domain architecture, SprT-like spans 5–140 (DYVREVSLAD…ACGRCHGRLI (136 aa)). His64 lines the Zn(2+) pocket. Glu65 is a catalytic residue. Zn(2+) is bound at residue His68.

Belongs to the SprT family. Requires Zn(2+) as cofactor.

It is found in the cytoplasm. The sequence is that of Protein SprT-like from Streptococcus equi subsp. zooepidemicus (strain MGCS10565).